The following is a 400-amino-acid chain: Imidazolonepropionase (400 aa).

Fe(3+) is bound by residues His-70 and His-72. 2 residues coordinate Zn(2+): His-70 and His-72. Positions 79, 142, and 175 each coordinate 4-imidazolone-5-propanoate. Tyr-142 lines the N-formimidoyl-L-glutamate pocket. His-239 contacts Fe(3+). His-239 serves as a coordination point for Zn(2+). Gln-242 lines the 4-imidazolone-5-propanoate pocket. Residue Asp-314 participates in Fe(3+) binding. Asp-314 lines the Zn(2+) pocket. N-formimidoyl-L-glutamate contacts are provided by Asn-316 and Gly-318. Position 319 (Thr-319) interacts with 4-imidazolone-5-propanoate.

The protein belongs to the metallo-dependent hydrolases superfamily. HutI family. It depends on Zn(2+) as a cofactor. Fe(3+) serves as cofactor.

It is found in the cytoplasm. The enzyme catalyses 4-imidazolone-5-propanoate + H2O = N-formimidoyl-L-glutamate. It participates in amino-acid degradation; L-histidine degradation into L-glutamate; N-formimidoyl-L-glutamate from L-histidine: step 3/3. Catalyzes the hydrolytic cleavage of the carbon-nitrogen bond in imidazolone-5-propanoate to yield N-formimidoyl-L-glutamate. It is the third step in the universal histidine degradation pathway. This Methylobacterium nodulans (strain LMG 21967 / CNCM I-2342 / ORS 2060) protein is Imidazolonepropionase.